The chain runs to 125 residues: Glycine cleavage system H protein (125 aa).

Residues 23 to 104 (VVYIGITDYA…PYENWILKVK (82 aa)) form the Lipoyl-binding domain. Position 64 is an N6-lipoyllysine (Lys64).

The protein belongs to the GcvH family. The glycine cleavage system is composed of four proteins: P, T, L and H. (R)-lipoate is required as a cofactor.

Functionally, the glycine cleavage system catalyzes the degradation of glycine. The H protein shuttles the methylamine group of glycine from the P protein to the T protein. This is Glycine cleavage system H protein from Clostridioides difficile (strain 630) (Peptoclostridium difficile).